Consider the following 148-residue polypeptide: MGRFISVSFGLLVVFLSLSGAGAGLCCPLDWSSYDLYCYKVFKQQMNWTDAEQFCTQQHTGSHLVSFHSTEEVDFVVQMSYKSLDTTFFWIGVNNIWNGCNWQWSDGTGLDYKEWREQFECLVAKTFDNQWWSMDCNSTYSFVCKFQA.

An N-terminal signal peptide occupies residues 1–23 (MGRFISVSFGLLVVFLSLSGAGA). Cys27 and Cys38 form a disulfide bridge. A C-type lectin domain is found at 34–145 (YDLYCYKVFK…CNSTYSFVCK (112 aa)). A glycan (N-linked (GlcNAc...) asparagine) is linked at Asn47. 2 cysteine pairs are disulfide-bonded: Cys55-Cys144 and Cys121-Cys136. The N-linked (GlcNAc...) asparagine glycan is linked to Asn137.

As to quaternary structure, tetramer of heterodimers of alpha and beta subunits (alphabeta)(4); disulfide-linked. In terms of tissue distribution, expressed by the venom gland.

Its subcellular location is the secreted. Its function is as follows. Snaclec that induces human platelet aggregation in the absence of any cofactor with the EC(50) of 0.25 nM and causes tyrosine phosphorylation in human platelets. Antibodies against either platelet GPIbalpha (GP1BA) or GPVI (GP6) inhibit alboaggregin D-induced platelet aggregation. Only the combination of these two antibodies completely inhibit aggregation, suggesting that it acts through both GPIbalpha (GP1BA) and GPVI (GP6). The protein is Snaclec alboaggregin-D subunit beta of Trimeresurus albolabris (White-lipped pit viper).